The sequence spans 891 residues: Alanine--tRNA ligase (891 aa).

Residues histidine 564, histidine 568, cysteine 678, and histidine 682 each coordinate Zn(2+).

The protein belongs to the class-II aminoacyl-tRNA synthetase family. Requires Zn(2+) as cofactor.

It localises to the cytoplasm. It catalyses the reaction tRNA(Ala) + L-alanine + ATP = L-alanyl-tRNA(Ala) + AMP + diphosphate. Functionally, catalyzes the attachment of alanine to tRNA(Ala) in a two-step reaction: alanine is first activated by ATP to form Ala-AMP and then transferred to the acceptor end of tRNA(Ala). Also edits incorrectly charged Ser-tRNA(Ala) and Gly-tRNA(Ala) via its editing domain. In Nitrobacter winogradskyi (strain ATCC 25391 / DSM 10237 / CIP 104748 / NCIMB 11846 / Nb-255), this protein is Alanine--tRNA ligase.